We begin with the raw amino-acid sequence, 492 residues long: 3-octaprenyl-4-hydroxybenzoate carboxy-lyase (492 aa).

Asn-177 lines the Mn(2+) pocket. Prenylated FMN is bound by residues 180 to 182 (IYR), 194 to 196 (RWL), and 199 to 200 (RG). Position 243 (Glu-243) interacts with Mn(2+). Catalysis depends on Asp-292, which acts as the Proton donor.

This sequence belongs to the UbiD family. Homohexamer. Requires prenylated FMN as cofactor. It depends on Mn(2+) as a cofactor.

The protein localises to the cell membrane. It catalyses the reaction a 4-hydroxy-3-(all-trans-polyprenyl)benzoate + H(+) = a 2-(all-trans-polyprenyl)phenol + CO2. The protein operates within cofactor biosynthesis; ubiquinone biosynthesis. In terms of biological role, catalyzes the decarboxylation of 3-octaprenyl-4-hydroxy benzoate to 2-octaprenylphenol, an intermediate step in ubiquinone biosynthesis. In Neisseria meningitidis serogroup C / serotype 2a (strain ATCC 700532 / DSM 15464 / FAM18), this protein is 3-octaprenyl-4-hydroxybenzoate carboxy-lyase.